The following is a 374-amino-acid chain: Quinolinate synthase (374 aa).

Iminosuccinate-binding residues include histidine 53 and serine 70. Cysteine 116 provides a ligand contact to [4Fe-4S] cluster. Residues 148 to 150 (YMN) and serine 169 each bind iminosuccinate. Cysteine 236 serves as a coordination point for [4Fe-4S] cluster. Iminosuccinate contacts are provided by residues 262–264 (HPE) and threonine 279. Cysteine 327 contributes to the [4Fe-4S] cluster binding site.

It belongs to the quinolinate synthase family. Type 3 subfamily. It depends on [4Fe-4S] cluster as a cofactor.

It localises to the cytoplasm. It catalyses the reaction iminosuccinate + dihydroxyacetone phosphate = quinolinate + phosphate + 2 H2O + H(+). It functions in the pathway cofactor biosynthesis; NAD(+) biosynthesis; quinolinate from iminoaspartate: step 1/1. Catalyzes the condensation of iminoaspartate with dihydroxyacetone phosphate to form quinolinate. In Haloarcula marismortui (strain ATCC 43049 / DSM 3752 / JCM 8966 / VKM B-1809) (Halobacterium marismortui), this protein is Quinolinate synthase.